We begin with the raw amino-acid sequence, 288 residues long: Bifunctional protein FolD 2 (288 aa).

NADP(+) contacts are provided by residues 166–168 (GRS) and serine 191.

This sequence belongs to the tetrahydrofolate dehydrogenase/cyclohydrolase family. Homodimer.

The catalysed reaction is (6R)-5,10-methylene-5,6,7,8-tetrahydrofolate + NADP(+) = (6R)-5,10-methenyltetrahydrofolate + NADPH. The enzyme catalyses (6R)-5,10-methenyltetrahydrofolate + H2O = (6R)-10-formyltetrahydrofolate + H(+). It functions in the pathway one-carbon metabolism; tetrahydrofolate interconversion. Catalyzes the oxidation of 5,10-methylenetetrahydrofolate to 5,10-methenyltetrahydrofolate and then the hydrolysis of 5,10-methenyltetrahydrofolate to 10-formyltetrahydrofolate. In Frankia casuarinae (strain DSM 45818 / CECT 9043 / HFP020203 / CcI3), this protein is Bifunctional protein FolD 2.